The chain runs to 688 residues: Acyl-CoA synthetase short-chain family member B, mitochondrial (688 aa).

It belongs to the ATP-dependent AMP-binding enzyme family.

It localises to the mitochondrion. The catalysed reaction is acetate + ATP + CoA = acetyl-CoA + AMP + diphosphate. In terms of biological role, activates acetate so that it can be used for lipid synthesis or for energy generation. In Dictyostelium discoideum (Social amoeba), this protein is Acyl-CoA synthetase short-chain family member B, mitochondrial (aslB).